A 684-amino-acid polypeptide reads, in one-letter code: Galactocerebrosidase (684 aa).

Positions 1 to 42 are cleaved as a signal peptide; that stretch reads MANSQPKASQQRQAKVMTAAAGSASRVAVPLLLCALLVPGGA. Substrate-binding residues include Thr-109, Trp-151, and Asn-197. Glu-198 (proton donor/acceptor) is an active-site residue. The Nucleophile role is filled by Glu-274. Cys-287 and Cys-394 are disulfide-bonded. 2 N-linked (GlcNAc...) asparagine glycosylation sites follow: Asn-300 and Asn-379. Arg-396 is a substrate binding site. Residues Asn-403, Asn-558, Asn-601, and Asn-645 are each glycosylated (N-linked (GlcNAc...) asparagine).

The protein belongs to the glycosyl hydrolase 59 family. In terms of tissue distribution, detected in brain and kidney.

It is found in the lysosome. It catalyses the reaction a beta-D-galactosyl-(1&lt;-&gt;1')-N-acylsphing-4-enine + H2O = an N-acylsphing-4-enine + D-galactose. It carries out the reaction a D-galactosylceramide + H2O = an N-acyl-sphingoid base + D-galactose. The catalysed reaction is beta-D-galactosyl-(1&lt;-&gt;1)-sphing-4-enine + H2O = sphing-4-enine + D-galactose. Hydrolyzes the galactose ester bonds of glycolipids such as galactosylceramide and galactosylsphingosine. Enzyme with very low activity responsible for the lysosomal catabolism of galactosylceramide, a major lipid in myelin, kidney and epithelial cells of small intestine and colon. The sequence is that of Galactocerebrosidase from Mus musculus (Mouse).